Reading from the N-terminus, the 528-residue chain is Membrane protein insertase YidC (528 aa).

5 consecutive transmembrane segments (helical) span residues 13–33 (ILLA…FFIP), 336–356 (WGWA…PLTY), 406–426 (LPIL…LNAI), 446–466 (YFIL…ITPM), and 481–501 (PVIF…YWFV).

It belongs to the OXA1/ALB3/YidC family. Type 1 subfamily. As to quaternary structure, interacts with the Sec translocase complex via SecD. Specifically interacts with transmembrane segments of nascent integral membrane proteins during membrane integration.

Its subcellular location is the cell inner membrane. In terms of biological role, required for the insertion and/or proper folding and/or complex formation of integral membrane proteins into the membrane. Involved in integration of membrane proteins that insert both dependently and independently of the Sec translocase complex, as well as at least some lipoproteins. Aids folding of multispanning membrane proteins. The chain is Membrane protein insertase YidC from Campylobacter jejuni subsp. jejuni serotype O:2 (strain ATCC 700819 / NCTC 11168).